The following is a 458-amino-acid chain: Delta(8)-fatty-acid desaturase (458 aa).

Residues 16-100 (KKYITSKELK…LKDYQVSDIS (85 aa)) form the Cytochrome b5 heme-binding domain. H51 and H74 together coordinate heme. 2 consecutive transmembrane segments (helical) span residues 122 to 142 (GVIY…YGVL) and 147 to 167 (FWIH…IAYL). Positions 169-173 (HDAGH) match the Histidine box-1 motif. Residues 185-205 (FAGIFIGNCITGISIAWWKWT) form a helical membrane-spanning segment. Positions 206-210 (HNAHH) match the Histidine box-2 motif. The next 3 membrane-spanning stretches (helical) occupy residues 264–284 (YYPI…LLLI), 293–313 (GLNI…VSRL), and 320–340 (VAFV…FTLN). The Histidine box-3 motif lies at 383-387 (QLEHH).

This sequence belongs to the fatty acid desaturase type 1 family. Fe cation serves as cofactor.

The protein localises to the membrane. It catalyses the reaction an N-acyl-(4R)-4-hydroxysphinganine + 2 Fe(II)-[cytochrome b5] + O2 + 2 H(+) = a (4R,8E)-4-hydroxysphingenine ceramide + 2 Fe(III)-[cytochrome b5] + 2 H2O. The catalysed reaction is an N-acyl-(4R)-4-hydroxysphinganine + 2 Fe(II)-[cytochrome b5] + O2 + 2 H(+) = a (4R,8Z)-4-hydroxysphing-8-enine ceramide + 2 Fe(III)-[cytochrome b5] + 2 H2O. Its function is as follows. Plays a major role as delta(8)-fatty-acid desaturase which introduces a double bond at the 8-position in the long-chain base (LCB) of ceramides with or without a hydroxy group at the 4-position. The enzyme produces both the 8E and 8Z isomers. This structural modification contributes to the quantitative partitioning of ceramides between the two major sphingolipid classes, glucosylceramides and glycosylinositolphosphoryl ceramides. Sphingolipids are important membrane components involved in environmental stress responses, such as resistance to chilling, and act as cell signaling molecules. The protein is Delta(8)-fatty-acid desaturase (sld1) of Helianthus annuus (Common sunflower).